Consider the following 338-residue polypeptide: 1-aminocyclopropane-1-carboxylate deaminase (338 aa).

Lys-51 carries the N6-(pyridoxal phosphate)lysine modification. Ser-78 serves as the catalytic Nucleophile.

Belongs to the ACC deaminase/D-cysteine desulfhydrase family. Homotrimer. The cofactor is pyridoxal 5'-phosphate.

It carries out the reaction 1-aminocyclopropane-1-carboxylate + H2O = 2-oxobutanoate + NH4(+). Functionally, catalyzes a cyclopropane ring-opening reaction, the irreversible conversion of 1-aminocyclopropane-1-carboxylate (ACC) to ammonia and alpha-ketobutyrate. Allows growth on ACC as a nitrogen source. The polypeptide is 1-aminocyclopropane-1-carboxylate deaminase (Pseudomonas putida (Arthrobacter siderocapsulatus)).